Here is an 87-residue protein sequence, read N- to C-terminus: HssA/B-like protein 56 (87 aa).

This sequence belongs to the hssA/B family.

The sequence is that of HssA/B-like protein 56 (hssl56) from Dictyostelium discoideum (Social amoeba).